A 100-amino-acid polypeptide reads, in one-letter code: UPF0473 protein lwe1514 (100 aa).

Belongs to the UPF0473 family.

This chain is UPF0473 protein lwe1514, found in Listeria welshimeri serovar 6b (strain ATCC 35897 / DSM 20650 / CCUG 15529 / CIP 8149 / NCTC 11857 / SLCC 5334 / V8).